A 469-amino-acid polypeptide reads, in one-letter code: Protein translocase subunit SecY (469 aa).

The Cytoplasmic segment spans residues 1 to 20 (MSFIDSLATLGQYLPAVTKP). The chain crosses the membrane as a helical span at residues 21–47 (KEKPSLGQKLVWSLVAVIIYLIMASTP). The Extracellular portion of the chain corresponds to 48 to 59 (LYGITSASFFKN). The segment at residues 60-67 (LILEQIIF) is an intramembrane region (helical). Residues 60–88 (LILEQIIFASTTGTLAQLGIGPIITAGLI) traverse the membrane as a discontinuously helical segment. The stretch at 68–79 (ASTTGTLAQLGI) is an intramembrane region. An intramembrane region (helical) is located at residues 80-88 (GPIITAGLI). Topologically, residues 89-109 (MQILAGSKLISIDLNDPDDRV) are cytoplasmic. A helical membrane pass occupies residues 110–131 (KFTEAQKGLAFIFILVESALFG). Over 132-146 (YVLARTSTTINASIL) the chain is Extracellular. A helical transmembrane segment spans residues 147–171 (FIAGIVIAQLIVATYLILLLDELIQ). The Cytoplasmic portion of the chain corresponds to 172-178 (KGWGLGS). A helical transmembrane segment spans residues 179–197 (GVSLFILAGVMKIMFWDMF). Over 198-240 (GIASVSSQNLPIGFFPALFTALASHSDVLNLIVNTSTKNLFQP) the chain is Extracellular. The helical transmembrane segment at 241-262 (DLVGLVTTIALIIITIYLTTMT) threads the bilayer. The Cytoplasmic portion of the chain corresponds to 263–287 (IEIPVTSQKLRGIRRTIPLNFLYVS). A helical transmembrane segment spans residues 288–309 (SIPVIFVAVLGSDIQLFASLAS). Topologically, residues 310 to 347 (YVSPSASNILNTVSGVFFFPPPNSAIPHSIYAVVLDPL) are extracellular. Residues 348-367 (GALEYAVVFIVLSILFGILW) form a helical membrane-spanning segment. Residues 368 to 410 (VDVAGLDPATQAQQLVEAGIEIPGVRNNPKIIEGILARYIYPL) lie on the Cytoplasmic side of the membrane. Residues 411–429 (AFFSSIIVGLIAVFATLLG) form a helical membrane-spanning segment. Residues 430–432 (AYG) lie on the Extracellular side of the membrane. The helical transmembrane segment at 433–447 (TGIGILLAVTIAIQY) threads the bilayer. Residues 448–469 (YSLLAYERSLEMYPLLKRLIGE) are Cytoplasmic-facing.

This sequence belongs to the SecY/SEC61-alpha family. Component of the Sec protein translocase complex. Heterotrimer consisting of alpha (SecY), beta (SecG) and gamma (SecE) subunits. The heterotrimers can form oligomers, although 1 heterotrimer is thought to be able to translocate proteins. Interacts with the ribosome. May interact with SecDF, and other proteins may be involved.

The protein localises to the cell membrane. Functionally, the central subunit of the protein translocation channel SecYEG. Consists of two halves formed by TMs 1-5 and 6-10. These two domains form a lateral gate at the front which open onto the bilayer between TMs 2 and 7, and are clamped together by SecE at the back. The channel is closed by both a pore ring composed of hydrophobic SecY resides and a short helix (helix 2A) on the extracellular side of the membrane which forms a plug. The plug probably moves laterally to allow the channel to open. The ring and the pore may move independently. This Saccharolobus solfataricus (strain ATCC 35092 / DSM 1617 / JCM 11322 / P2) (Sulfolobus solfataricus) protein is Protein translocase subunit SecY.